A 156-amino-acid polypeptide reads, in one-letter code: Cyanate hydratase (156 aa).

Residues Arg-96, Glu-99, and Ser-122 contribute to the active site.

This sequence belongs to the cyanase family.

It carries out the reaction cyanate + hydrogencarbonate + 3 H(+) = NH4(+) + 2 CO2. Functionally, catalyzes the reaction of cyanate with bicarbonate to produce ammonia and carbon dioxide. The sequence is that of Cyanate hydratase from Burkholderia mallei (strain NCTC 10247).